The sequence spans 124 residues: Small ribosomal subunit protein uS12 (124 aa).

Asp89 is subject to 3-methylthioaspartic acid.

This sequence belongs to the universal ribosomal protein uS12 family. As to quaternary structure, part of the 30S ribosomal subunit. Contacts proteins S8 and S17. May interact with IF1 in the 30S initiation complex.

With S4 and S5 plays an important role in translational accuracy. Functionally, interacts with and stabilizes bases of the 16S rRNA that are involved in tRNA selection in the A site and with the mRNA backbone. Located at the interface of the 30S and 50S subunits, it traverses the body of the 30S subunit contacting proteins on the other side and probably holding the rRNA structure together. The combined cluster of proteins S8, S12 and S17 appears to hold together the shoulder and platform of the 30S subunit. This chain is Small ribosomal subunit protein uS12 (rpsL), found in Mannheimia haemolytica (Pasteurella haemolytica).